The chain runs to 226 residues: Enolase-phosphatase E1 (226 aa).

The Mg(2+) site is built by aspartate 9 and glutamate 11. Residues 115–116 (SS) and lysine 160 contribute to the substrate site. Aspartate 185 is a Mg(2+) binding site.

The protein belongs to the HAD-like hydrolase superfamily. MasA/MtnC family. As to quaternary structure, monomer. The cofactor is Mg(2+).

The protein localises to the cytoplasm. It localises to the nucleus. The enzyme catalyses 5-methylsulfanyl-2,3-dioxopentyl phosphate + H2O = 1,2-dihydroxy-5-(methylsulfanyl)pent-1-en-3-one + phosphate. Its pathway is amino-acid biosynthesis; L-methionine biosynthesis via salvage pathway; L-methionine from S-methyl-5-thio-alpha-D-ribose 1-phosphate: step 3/6. It participates in amino-acid biosynthesis; L-methionine biosynthesis via salvage pathway; L-methionine from S-methyl-5-thio-alpha-D-ribose 1-phosphate: step 4/6. Functionally, bifunctional enzyme that catalyzes the enolization of 2,3-diketo-5-methylthiopentyl-1-phosphate (DK-MTP-1-P) into the intermediate 2-hydroxy-3-keto-5-methylthiopentenyl-1-phosphate (HK-MTPenyl-1-P), which is then dephosphorylated to form the acireductone 1,2-dihydroxy-3-keto-5-methylthiopentene (DHK-MTPene). In Zygosaccharomyces rouxii (strain ATCC 2623 / CBS 732 / NBRC 1130 / NCYC 568 / NRRL Y-229), this protein is Enolase-phosphatase E1.